The chain runs to 379 residues: Chaperone protein DnaJ (379 aa).

The J domain maps to 5-69; that stretch reads EYYERLGVDK…QKRAAYDQYG (65 aa). The CR-type zinc finger occupies 141–223; that stretch reads GVEKQVKYNR…CHGSGHEKVA (83 aa). Cys-154, Cys-157, Cys-171, Cys-174, Cys-197, Cys-200, Cys-211, and Cys-214 together coordinate Zn(2+). CXXCXGXG motif repeat units follow at residues 154–161, 171–178, 197–204, and 211–218; these read CHTCDGSG, CHKCGGRG, CDVCHGTG, and CTTCHGSG.

It belongs to the DnaJ family. As to quaternary structure, homodimer. The cofactor is Zn(2+).

The protein resides in the cytoplasm. In terms of biological role, participates actively in the response to hyperosmotic and heat shock by preventing the aggregation of stress-denatured proteins and by disaggregating proteins, also in an autonomous, DnaK-independent fashion. Unfolded proteins bind initially to DnaJ; upon interaction with the DnaJ-bound protein, DnaK hydrolyzes its bound ATP, resulting in the formation of a stable complex. GrpE releases ADP from DnaK; ATP binding to DnaK triggers the release of the substrate protein, thus completing the reaction cycle. Several rounds of ATP-dependent interactions between DnaJ, DnaK and GrpE are required for fully efficient folding. Also involved, together with DnaK and GrpE, in the DNA replication of plasmids through activation of initiation proteins. This Lactococcus lactis subsp. cremoris (strain SK11) protein is Chaperone protein DnaJ.